Here is a 201-residue protein sequence, read N- to C-terminus: MAELAPDTVPLAGVVLAGGESRRMGRDKATLPLPGGTTTLVEHMVGILGQRCAPVFVMAAPGQPLPTLPVPVLRDELPGLGPLPATGRGLRAAAEAGVRLAFVCAVDMPYLTVELIEDLARRAVQTDAEVVLPWDGRNHYLAAVYRTDLADRVDTLVGAGERKMSALVDASDALRIVMADSRPLTNVNSAAGLHAPMQPGR.

GTP contacts are provided by residues 16–18, Lys28, Asp75, and Asp107; that span reads LAG. Asp107 provides a ligand contact to Mg(2+).

Belongs to the MobA family. Requires Mg(2+) as cofactor.

Its subcellular location is the cytoplasm. It catalyses the reaction Mo-molybdopterin + GTP + H(+) = Mo-molybdopterin guanine dinucleotide + diphosphate. Functionally, transfers a GMP moiety from GTP to Mo-molybdopterin (Mo-MPT) cofactor (Moco or molybdenum cofactor) to form Mo-molybdopterin guanine dinucleotide (Mo-MGD) cofactor. This Mycobacterium bovis (strain ATCC BAA-935 / AF2122/97) protein is Probable molybdenum cofactor guanylyltransferase.